We begin with the raw amino-acid sequence, 326 residues long: Phospho-N-acetylmuramoyl-pentapeptide-transferase (326 aa).

Transmembrane regions (helical) follow at residues 3–23 (ISIS…PAFI), 51–71 (TMGG…LALF), 79–99 (VGMI…DDFL), 115–135 (LALQ…GGDM), 138–158 (VFSY…FWLV), 169–189 (GIDG…GVIA), 195–215 (MDIL…FVFN), 221–243 (VFMG…MALH), and 306–326 (FFFW…LYLM).

It belongs to the glycosyltransferase 4 family. MraY subfamily. Requires Mg(2+) as cofactor.

The protein resides in the cell membrane. The enzyme catalyses UDP-N-acetyl-alpha-D-muramoyl-L-alanyl-gamma-D-glutamyl-L-lysyl-D-alanyl-D-alanine + di-trans,octa-cis-undecaprenyl phosphate = Mur2Ac(oyl-L-Ala-gamma-D-Glu-L-Lys-D-Ala-D-Ala)-di-trans,octa-cis-undecaprenyl diphosphate + UMP. It functions in the pathway cell wall biogenesis; peptidoglycan biosynthesis. Catalyzes the initial step of the lipid cycle reactions in the biosynthesis of the cell wall peptidoglycan: transfers peptidoglycan precursor phospho-MurNAc-pentapeptide from UDP-MurNAc-pentapeptide onto the lipid carrier undecaprenyl phosphate, yielding undecaprenyl-pyrophosphoryl-MurNAc-pentapeptide, known as lipid I. This Streptococcus pneumoniae (strain ATCC 700669 / Spain 23F-1) protein is Phospho-N-acetylmuramoyl-pentapeptide-transferase.